The chain runs to 831 residues: DNA ligase (831 aa).

NAD(+) contacts are provided by residues 34–38 (DADYD), 83–84 (SL), and E114. K116 (N6-AMP-lysine intermediate) is an active-site residue. Residues R137, E174, K291, and K315 each contribute to the NAD(+) site. Positions 409, 412, 427, and 433 each coordinate Zn(2+). The BRCT domain maps to 749 to 831 (AHTAPLNGQS…LAFLGQYSAQ (83 aa)).

This sequence belongs to the NAD-dependent DNA ligase family. LigA subfamily. Mg(2+) serves as cofactor. It depends on Mn(2+) as a cofactor.

It catalyses the reaction NAD(+) + (deoxyribonucleotide)n-3'-hydroxyl + 5'-phospho-(deoxyribonucleotide)m = (deoxyribonucleotide)n+m + AMP + beta-nicotinamide D-nucleotide.. DNA ligase that catalyzes the formation of phosphodiester linkages between 5'-phosphoryl and 3'-hydroxyl groups in double-stranded DNA using NAD as a coenzyme and as the energy source for the reaction. It is essential for DNA replication and repair of damaged DNA. In Xylella fastidiosa (strain 9a5c), this protein is DNA ligase.